The primary structure comprises 144 residues: uncharacterized protein (144 aa).

The region spanning 50–140 (NQDKAIVVDT…YWKTDNLPLI (91 aa)) is the Rhodanese domain.

This is an uncharacterized protein from Buchnera aphidicola subsp. Acyrthosiphon pisum (strain APS) (Acyrthosiphon pisum symbiotic bacterium).